Here is a 124-residue protein sequence, read N- to C-terminus: Small ribosomal subunit protein uS12 (124 aa).

At Asp-89 the chain carries 3-methylthioaspartic acid. The interval 105-124 is disordered; the sequence is QGVKNRKQARSRYGAKKEKS. Positions 108-118 are enriched in basic residues; the sequence is KNRKQARSRYG.

Belongs to the universal ribosomal protein uS12 family. Part of the 30S ribosomal subunit. Contacts proteins S8 and S17. May interact with IF1 in the 30S initiation complex.

Functionally, with S4 and S5 plays an important role in translational accuracy. In terms of biological role, interacts with and stabilizes bases of the 16S rRNA that are involved in tRNA selection in the A site and with the mRNA backbone. Located at the interface of the 30S and 50S subunits, it traverses the body of the 30S subunit contacting proteins on the other side and probably holding the rRNA structure together. The combined cluster of proteins S8, S12 and S17 appears to hold together the shoulder and platform of the 30S subunit. The polypeptide is Small ribosomal subunit protein uS12 (Mycobacterium leprae (strain Br4923)).